The following is a 303-amino-acid chain: Glycine--tRNA ligase alpha subunit (303 aa).

It belongs to the class-II aminoacyl-tRNA synthetase family. In terms of assembly, tetramer of two alpha and two beta subunits.

The protein resides in the cytoplasm. It carries out the reaction tRNA(Gly) + glycine + ATP = glycyl-tRNA(Gly) + AMP + diphosphate. This chain is Glycine--tRNA ligase alpha subunit, found in Stenotrophomonas maltophilia (strain K279a).